An 878-amino-acid chain; its full sequence is F-box DNA helicase protein 1 (878 aa).

Residues 8–56 (SCKFYRLPLEIIPLICRFLSVQDIQSFIRVFPSFQTILDSSNDLFWKKK) enclose the F-box domain.

Belongs to the helicase family. UvrD subfamily. As to quaternary structure, part of the E3 ubiquitin ligase Skp1-Cullin-1-F-box (SCF) complex. Interacts with skp1 and ssb1. Mg(2+) is required as a cofactor. Mn(2+) serves as cofactor.

Its subcellular location is the cytoplasm. The protein resides in the nucleus. The enzyme catalyses Couples ATP hydrolysis with the unwinding of duplex DNA by translocating in the 3'-5' direction.. It catalyses the reaction ATP + H2O = ADP + phosphate + H(+). The protein operates within protein modification; protein ubiquitination. In terms of biological role, involved in ATP-dependent DNA-unwinding in a 3' to 5' direction, and ATP-ase activities stimulated by the single-stranded DNA-binding protein ssb1. Essential for viability and normal growth of stationary phase cells and in the absence of either srs2 or rqh1 DNA helicase. Involved in DNA recombination repair of strand breaks and stalled or collapsed replication forks, on the rhp51-dependent pathway: promotes rhp51 filament dissolution from stalled forks, thereby inhibiting homologous recombination and preventing excessive recombination. Ubiquitination and DNA helicase activities are essential for controlling rhp51-dependent recombination in the absence of rad22. Plays a role in the processing of toxic recombination intermediates. Promotes proper chromosome segregation. In Schizosaccharomyces pombe (strain 972 / ATCC 24843) (Fission yeast), this protein is F-box DNA helicase protein 1 (fbh1).